The primary structure comprises 166 residues: Large ribosomal subunit protein mL49 (166 aa).

A disordered region spans residues 56 to 78 (RIPDPPKHEHYPTPSGWQPPRDP).

It belongs to the mitochondrion-specific ribosomal protein mL49 family. As to quaternary structure, interacts with OXA1L.

The protein localises to the mitochondrion. This is Large ribosomal subunit protein mL49 (MRPL49) from Macaca fascicularis (Crab-eating macaque).